The chain runs to 391 residues: MTKAVIVSAARTPVGSFLGSFANLPAHELGAIVLKAVVERAGIDPSEVSETILGQVLTAAQGQNPARQAHIKVGLPRESAAWVINQVCGSGLRTVALAAQQVLLGDARIVVAGGQESMSLAPHAAYIAPGQKMGDMKMLDTMIKDGLWDAFNDYHMGTTAENVAGKWEISRAEQDQFAVASQNKAEAAQKAGKFADEIVPVTIKSRKGETVVDADEYIRHGATLEAMENVRPAFSKEGTVTAGNASGLNDGAAAVLVMTEDEAARRGLTPLARIASYATAGVDPQIMGTGPIPASRKALEKAGWSVGDLDLVEANEAFAAQAIAVNRDMGWDPSIVNVNGGAIAIGHPIGASGCRILNTLLFEMQRRDAKKGLATLCIGGGMGVALCLERP.

C88 serves as the catalytic Acyl-thioester intermediate. Residues H347 and C377 each act as proton acceptor in the active site.

It belongs to the thiolase-like superfamily. Thiolase family. In terms of assembly, homotetramer.

It localises to the cytoplasm. It catalyses the reaction 2 acetyl-CoA = acetoacetyl-CoA + CoA. It participates in metabolic intermediate biosynthesis; (R)-mevalonate biosynthesis; (R)-mevalonate from acetyl-CoA: step 1/3. The polypeptide is Acetyl-CoA acetyltransferase (phaA) (Paracoccus denitrificans).